Reading from the N-terminus, the 1030-residue chain is LPS-assembly protein LptD (1030 aa).

An N-terminal signal peptide occupies residues 1–32 (MEGPPTAAHAAAPLRTAVFLALAASWQQPAVA). The disordered stretch occupies residues 50–213 (VAKRKDGGAD…APAGWTCKPQ (164 aa)). Over residues 78-91 (LSQSNRAAPSTAVS) the composition is skewed to polar residues. The span at 126–137 (TEDEEDEESESA) shows a compositional bias: acidic residues. A compositionally biased stretch (pro residues) spans 161–171 (GTPPARAPRPE).

Belongs to the LptD family. As to quaternary structure, component of the lipopolysaccharide transport and assembly complex. Interacts with LptE and LptA.

The protein localises to the cell outer membrane. Its function is as follows. Together with LptE, is involved in the assembly of lipopolysaccharide (LPS) at the surface of the outer membrane. The protein is LPS-assembly protein LptD of Methylococcus capsulatus (strain ATCC 33009 / NCIMB 11132 / Bath).